We begin with the raw amino-acid sequence, 423 residues long: MFS-type transporter phiL (423 aa).

The next 3 helical transmembrane spans lie at 25–45, 82–102, and 111–131; these read IFCF…NSFI, IGLA…LGGV, and YIFV…IIFF. Residues asparagine 141 and asparagine 151 are each glycosylated (N-linked (GlcNAc...) asparagine). Residues 166–185 are disordered; that stretch reads DHASGRNLPNAGSKKSNPRN. Transmembrane regions (helical) follow at residues 203 to 223, 238 to 258, 298 to 318, and 321 to 341; these read VIIF…SLSY, LSYI…GFVV, IAVP…WTMS, and LPPI…TAAY. The N-linked (GlcNAc...) asparagine glycan is linked to asparagine 352. The next 2 helical transmembrane spans lie at 369–389 and 390–410; these read LLGA…GMGW and TFTA…FLLF.

Belongs to the major facilitator superfamily. CAR1 family.

The protein resides in the membrane. MFS-type transporter; part of the gene cluster that mediates the biosynthesis of the antihypercholesterolemic agents phomoidrides which are dimeric anhydrides. This Fungal sp. (strain ATCC 74256) protein is MFS-type transporter phiL.